Here is a 352-residue protein sequence, read N- to C-terminus: Anthranilate phosphoribosyltransferase (352 aa).

Residues Gly-82, 85-86, Ser-90, 92-95, 110-118, and Gly-122 each bind 5-phospho-alpha-D-ribose 1-diphosphate; these read GD, NIST, and KHGNRAVTG. Gly-82 provides a ligand contact to anthranilate. Residue Ser-94 participates in Mg(2+) binding. Asn-113 contributes to the anthranilate binding site. An anthranilate-binding site is contributed by Arg-168. Residues Asp-232 and Glu-233 each coordinate Mg(2+).

This sequence belongs to the anthranilate phosphoribosyltransferase family. In terms of assembly, homodimer. The cofactor is Mg(2+).

The catalysed reaction is N-(5-phospho-beta-D-ribosyl)anthranilate + diphosphate = 5-phospho-alpha-D-ribose 1-diphosphate + anthranilate. The protein operates within amino-acid biosynthesis; L-tryptophan biosynthesis; L-tryptophan from chorismate: step 2/5. Functionally, catalyzes the transfer of the phosphoribosyl group of 5-phosphorylribose-1-pyrophosphate (PRPP) to anthranilate to yield N-(5'-phosphoribosyl)-anthranilate (PRA). This chain is Anthranilate phosphoribosyltransferase, found in Methanothermobacter thermautotrophicus (strain ATCC 29096 / DSM 1053 / JCM 10044 / NBRC 100330 / Delta H) (Methanobacterium thermoautotrophicum).